A 1238-amino-acid polypeptide reads, in one-letter code: DNA-directed RNA polymerase subunit beta (1238 aa).

Belongs to the RNA polymerase beta chain family. In terms of assembly, the RNAP catalytic core consists of 2 alpha, 1 beta, 1 beta' and 1 omega subunit. When a sigma factor is associated with the core the holoenzyme is formed, which can initiate transcription.

It catalyses the reaction RNA(n) + a ribonucleoside 5'-triphosphate = RNA(n+1) + diphosphate. DNA-dependent RNA polymerase catalyzes the transcription of DNA into RNA using the four ribonucleoside triphosphates as substrates. The chain is DNA-directed RNA polymerase subunit beta from Clostridioides difficile (strain 630) (Peptoclostridium difficile).